The primary structure comprises 201 residues: Adenylyl-sulfate kinase (201 aa).

Glycine 35–serine 42 is a binding site for ATP. Serine 109 (phosphoserine intermediate) is an active-site residue.

This sequence belongs to the APS kinase family.

The catalysed reaction is adenosine 5'-phosphosulfate + ATP = 3'-phosphoadenylyl sulfate + ADP + H(+). Its pathway is sulfur metabolism; hydrogen sulfide biosynthesis; sulfite from sulfate: step 2/3. In terms of biological role, catalyzes the synthesis of activated sulfate. This chain is Adenylyl-sulfate kinase, found in Shigella boydii serotype 18 (strain CDC 3083-94 / BS512).